Consider the following 526-residue polypeptide: Cytochrome P450 monooxygenase 226 (526 aa).

Residues 15–35 (FATSYAALTVAAVTLLAALLV) form a helical membrane-spanning segment. N-linked (GlcNAc...) asparagine glycans are attached at residues Asn-219, Asn-277, and Asn-320. Cys-452 contributes to the heme binding site.

The protein belongs to the cytochrome P450 family. The cofactor is heme.

The protein localises to the membrane. Its pathway is secondary metabolite biosynthesis. Functionally, cytochrome P450 monooxygenase that is able to use anthracene, carbazole and phenanthrene as substrates for oxidation. These multifunctional properties against a series of polycyclic aromatic hydrocarbons (PAHs) suggest that CYP226 would play important roles, at least in part, in fungal metabolic systems involved in xenobiotic detoxification. The chain is Cytochrome P450 monooxygenase 226 from Postia placenta (strain ATCC 44394 / Madison 698-R) (Brown rot fungus).